The chain runs to 192 residues: dTTP/UTP pyrophosphatase (192 aa).

Asp71 functions as the Proton acceptor in the catalytic mechanism.

The protein belongs to the Maf family. YhdE subfamily. The cofactor is a divalent metal cation.

Its subcellular location is the cytoplasm. It catalyses the reaction dTTP + H2O = dTMP + diphosphate + H(+). The enzyme catalyses UTP + H2O = UMP + diphosphate + H(+). In terms of biological role, nucleoside triphosphate pyrophosphatase that hydrolyzes dTTP and UTP. May have a dual role in cell division arrest and in preventing the incorporation of modified nucleotides into cellular nucleic acids. The chain is dTTP/UTP pyrophosphatase from Clostridium kluyveri (strain NBRC 12016).